The sequence spans 264 residues: Thymidylate synthase (264 aa).

Arg21 is a dUMP binding site. His51 contributes to the (6R)-5,10-methylene-5,6,7,8-tetrahydrofolate binding site. 126–127 contacts dUMP; that stretch reads RR. Cys146 functions as the Nucleophile in the catalytic mechanism. Residues 166 to 169, Asn177, and 207 to 209 contribute to the dUMP site; these read RSCD and HLY. Asp169 is a binding site for (6R)-5,10-methylene-5,6,7,8-tetrahydrofolate. Ala263 lines the (6R)-5,10-methylene-5,6,7,8-tetrahydrofolate pocket.

This sequence belongs to the thymidylate synthase family. Bacterial-type ThyA subfamily. As to quaternary structure, homodimer.

The protein localises to the cytoplasm. It carries out the reaction dUMP + (6R)-5,10-methylene-5,6,7,8-tetrahydrofolate = 7,8-dihydrofolate + dTMP. Its pathway is pyrimidine metabolism; dTTP biosynthesis. Functionally, catalyzes the reductive methylation of 2'-deoxyuridine-5'-monophosphate (dUMP) to 2'-deoxythymidine-5'-monophosphate (dTMP) while utilizing 5,10-methylenetetrahydrofolate (mTHF) as the methyl donor and reductant in the reaction, yielding dihydrofolate (DHF) as a by-product. This enzymatic reaction provides an intracellular de novo source of dTMP, an essential precursor for DNA biosynthesis. This is Thymidylate synthase from Shewanella baltica (strain OS223).